The primary structure comprises 222 residues: N-(5'-phosphoribosyl)anthranilate isomerase (222 aa).

Belongs to the TrpF family.

The catalysed reaction is N-(5-phospho-beta-D-ribosyl)anthranilate = 1-(2-carboxyphenylamino)-1-deoxy-D-ribulose 5-phosphate. It participates in amino-acid biosynthesis; L-tryptophan biosynthesis; L-tryptophan from chorismate: step 3/5. This Gloeobacter violaceus (strain ATCC 29082 / PCC 7421) protein is N-(5'-phosphoribosyl)anthranilate isomerase.